The primary structure comprises 85 residues: Conotoxin Lt28.5 (85 aa).

Residues 1-21 (MPKLEMMLLVLLILPLCYIDA) form the signal peptide. A propeptide spanning residues 22–40 (VGPPPPWNMEDEIIEHWQK) is cleaved from the precursor.

Belongs to the conotoxin D superfamily. Post-translationally, contains 5 disulfide bonds. In terms of tissue distribution, expressed by the venom duct.

Its subcellular location is the secreted. In terms of biological role, probable neurotoxin. This is Conotoxin Lt28.5 from Conus litteratus (Lettered cone).